The chain runs to 325 residues: 5-dehydro-2-deoxygluconokinase (325 aa).

This sequence belongs to the carbohydrate kinase PfkB family.

It catalyses the reaction 5-dehydro-2-deoxy-D-gluconate + ATP = 6-phospho-5-dehydro-2-deoxy-D-gluconate + ADP + H(+). The protein operates within polyol metabolism; myo-inositol degradation into acetyl-CoA; acetyl-CoA from myo-inositol: step 5/7. Functionally, catalyzes the phosphorylation of 5-dehydro-2-deoxy-D-gluconate (2-deoxy-5-keto-D-gluconate or DKG) to 6-phospho-5-dehydro-2-deoxy-D-gluconate (DKGP). This is 5-dehydro-2-deoxygluconokinase from Listeria innocua serovar 6a (strain ATCC BAA-680 / CLIP 11262).